The chain runs to 221 residues: Germin-like protein 5-1 (221 aa).

Residues 1–25 form the signal peptide; that stretch reads MARPSLPCAVVAVLLLALLPTPSTA. A disulfide bond links C35 and C50. Residues 62–210 form the Cupin type-1 domain; the sequence is KGLAAAGNTN…AFQVGTKEVE (149 aa). N71 carries N-linked (GlcNAc...) asparagine glycosylation. Mn(2+) is bound by residues H110, H112, E117, and H156.

Belongs to the germin family. Oligomer (believed to be a pentamer but probably hexamer).

The protein localises to the secreted. It is found in the extracellular space. The protein resides in the apoplast. In terms of biological role, may play a role in plant defense. Probably has no oxalate oxidase activity even if the active site is conserved. The sequence is that of Germin-like protein 5-1 from Oryza sativa subsp. japonica (Rice).